Consider the following 516-residue polypeptide: Multicopper oxidase CueO (516 aa).

The segment at residues 1 to 28 (MQRRDFLKYSVALGVASALPLWSRAVFA) is a signal peptide (tat-type signal). 2 consecutive Plastocyanin-like domains span residues 55–165 (GQST…IEDD) and 227–292 (PRGW…DNKP). Residues His-101, His-103, His-141, and His-143 each contribute to the Cu cation site. The interval 355–400 (MDPMLDMMGMQMLMEKYGDQAMAGMDHSQMMGHMGHGNMNHMNHGG) is methionine-rich region. A Plastocyanin-like 3 domain is found at 402–516 (FDFHHANKIN…DTGMMLGFTV (115 aa)). The Cu cation site is built by His-443, His-446, His-448, His-499, Cys-500, His-501, and His-505.

It belongs to the multicopper oxidase family. Monomer. Requires Cu cation as cofactor. In terms of processing, exported by the Tat system. The position of the signal peptide cleavage has been experimentally proven.

Its subcellular location is the periplasm. It catalyses the reaction 4 Cu(+) + O2 + 4 H(+) = 4 Cu(2+) + 2 H2O. Its activity is regulated as follows. Ferroxidase and phenoloxidase activities are enhanced considerably in the presence of excess copper ions. A labile regulatory copper ion near the T1 copper site is important for the copper associated activation of enzyme activity. Ag(+) acts as a potent inhibitor of oxidase activity by binding at Cu(+) binding sites, blocking Cu(+) substrate binding and oxidation. pPD oxidase activity is strongly inhibited by sodium azide, an inhibitor of the electron transfer. Functionally, multicopper oxidase involved in copper homeostasis and copper tolerance under aerobic conditions. Is responsible for the oxidation of Cu(+) to the less harmful Cu(2+) in the periplasm, thereby preventing Cu(+) from entering the cytoplasm. Probably primarily functions as a cuprous oxidase in vivo. In vitro, in the presence of excess copper ions, exhibits ferroxidase and phenoloxidase activities. Fe(2+) is an excellent substrate in the presence of excess Cu(2+), but is inactive in the absence of Cu(2+). Oxidizes the phenolate iron siderophores enterobactin, 2,3-dihydroxybenzoate (2,3-DHB) and 3-hydroxyanthranilate (3-HAA). Oxidation and thus inactivation of enterobactin could protect cells from the interaction of enterobactin with copper and play a central role as an interface between copper detoxification and iron homeostasis. Also oxidizes a variety of phenolic model substrates, including 2,2'-azinobis(3-ethylbenzthiazolinesulfonic acid) (ABTS), p-phenylenediamine (pPD), 2,6-dimethoxyphenol (2,6-DMP) and 3,4-dihydroxybenzoic acid (3,4-DHB). The sequence is that of Multicopper oxidase CueO from Escherichia coli (strain K12).